Consider the following 138-residue polypeptide: DNA-directed RNA polymerase II subunit 4 (138 aa).

S2 is modified (N-acetylserine).

Belongs to the eukaryotic RPB4 RNA polymerase subunit family. In terms of assembly, component of the RNA polymerase II complex consisting of at least 12 subunits. Interacts with NRPB7.

The protein resides in the nucleus. In terms of biological role, DNA-dependent RNA polymerase catalyzes the transcription of DNA into RNA using the four ribonucleoside triphosphates as substrates. Second largest component of RNA polymerase II which synthesizes mRNA precursors and many functional non-coding RNAs. Proposed to contribute to the polymerase catalytic activity and forms the polymerase active center together with the largest subunit. Pol II is the central component of the basal RNA polymerase II transcription machinery. It is composed of mobile elements that move relative to each other. The chain is DNA-directed RNA polymerase II subunit 4 (NRPB4) from Arabidopsis thaliana (Mouse-ear cress).